A 433-amino-acid polypeptide reads, in one-letter code: Metacaspase-1 (433 aa).

A disordered region spans residues 1 to 123 (MYPGRAKPTY…PPSQVQHTGP (123 aa)). Low complexity predominate over residues 9 to 44 (TYNNQQAQQAQSQVGYQTGYSNAQPQQQYYTAPQQQ). Composition is skewed to polar residues over residues 45-55 (NVSGSSMSFQH) and 83-109 (QQNY…QQPQ). Residues histidine 222 and cysteine 278 contribute to the active site.

Belongs to the peptidase C14B family.

Functionally, involved in cell death (apoptosis). This is Metacaspase-1 (MCA1) from Kluyveromyces lactis (strain ATCC 8585 / CBS 2359 / DSM 70799 / NBRC 1267 / NRRL Y-1140 / WM37) (Yeast).